A 115-amino-acid polypeptide reads, in one-letter code: NADH-ubiquinone oxidoreductase chain 3 (115 aa).

3 helical membrane-spanning segments follow: residues 3-23 (LMLT…IAFW), 55-75 (FFLV…LLPL), and 87-107 (VLFM…YEWI).

It belongs to the complex I subunit 3 family. Core subunit of respiratory chain NADH dehydrogenase (Complex I) which is composed of 45 different subunits. Interacts with TMEM186. Interacts with TMEM242.

It is found in the mitochondrion inner membrane. It catalyses the reaction a ubiquinone + NADH + 5 H(+)(in) = a ubiquinol + NAD(+) + 4 H(+)(out). In terms of biological role, core subunit of the mitochondrial membrane respiratory chain NADH dehydrogenase (Complex I) which catalyzes electron transfer from NADH through the respiratory chain, using ubiquinone as an electron acceptor. Essential for the catalytic activity of complex I. This is NADH-ubiquinone oxidoreductase chain 3 from Dugong dugon (Dugong).